Here is a 2027-residue protein sequence, read N- to C-terminus: Dedicator of cytokinesis protein 3 (2027 aa).

In terms of domain architecture, SH3 spans 6-67; sequence EEEKYGVVIC…PANYIHLKKA (62 aa). Residues 421 to 598 enclose the C2 DOCK-type domain; it reads RNDLYLTLEK…ESFFISTQLS (178 aa). One can recognise a DOCKER domain in the interval 1225–1632; that stretch reads KSEINKEEMY…LYHEFPGLDK (408 aa). S1655 is modified (phosphoserine). Disordered regions lie at residues 1672 to 1695, 1731 to 1768, 1846 to 1925, and 1971 to 2027; these read GTGR…MMMM, SSSQ…SLPD, DTPP…DEGL, and PPKP…RGEQ. 2 stretches are compositionally biased toward low complexity: residues 1676-1695 and 1731-1751; these read HSSS…MMMM and SSSQ…APSQ. The span at 1752–1763 shows a compositional bias: polar residues; that stretch reads MITSAPSSTRGS. Positions 1877 to 1899 are enriched in low complexity; sequence GSNSTLSGSASSGVSSLSESNFG. Residues 1967–1973 carry the SH3-binding motif; that stretch reads PPALPPK. 2 stretches are compositionally biased toward basic and acidic residues: residues 1981-1998 and 2011-2027; these read ALEH…ERPR and VKEE…RGEQ.

The protein belongs to the DOCK family. Interacts with presenilin proteins PSEN1 and PSEN2. Interacts with CRK. As to expression, expressed in brain, spinal cord, pituitary gland, testis. Not expressed in heart, liver, kidney, spleen and lung. In brain, it is highly expressed in the cerebral cortex and hippocampus, while it is absent in other tissues, except in spinal cord. In the cerebral cortex, it is found within the intermediate (III and IV) and deep (V and VI) layers, whereas it is weakly expressed in superficial layer I. It is also abundant in the piriform cortex. Within the hippocampus, it is expressed in the pyramidal neurons of the CA1, CA2, and CA3 regions and the dentate gyrus.

It is found in the cytoplasm. In terms of biological role, potential guanine nucleotide exchange factor (GEF). GEF proteins activate some small GTPases by exchanging bound GDP for free GTP. Its interaction with presenilin proteins as well as its ability to stimulate Tau/MAPT phosphorylation suggest that it may be involved in Alzheimer disease. Ectopic expression in nerve cells decreases the secretion of amyloid-beta APBA1 protein and lowers the rate of cell-substratum adhesion, suggesting that it may affect the function of some small GTPase involved in the regulation of actin cytoskeleton or cell adhesion receptors. This is Dedicator of cytokinesis protein 3 (Dock3) from Mus musculus (Mouse).